The following is a 362-amino-acid chain: 11-beta-hydroxysteroid dehydrogenase B (362 aa).

A helical; Signal-anchor for type II membrane protein membrane pass occupies residues 10–30 (FVVPPASLLMLAFTWPTLFFI). The short motif at 13–26 (PPASLLMLAFTWPT) is the Proline-knob element. 55-81 (GASSGIGEQIAYQYAKRGANLVLVARR) is a binding site for NADP(+). Ser185 provides a ligand contact to substrate. Residue Tyr198 is the Proton acceptor of the active site. Residues 198–202 (YSAAK) and Lys202 each bind NADP(+). The interval 321–362 (TGRPLLETSSPRRSAVMEGSSPRRLPPGPLTFSPAFQQQKSE) is disordered.

This sequence belongs to the short-chain dehydrogenases/reductases (SDR) family. Expressed in seeds (at protein level). Not expressed in stem, leaf or root (at protein level).

Its subcellular location is the lipid droplet. The protein localises to the membrane. The catalysed reaction is an 11beta-hydroxysteroid + NADP(+) = an 11-oxosteroid + NADPH + H(+). It carries out the reaction corticosterone + NADP(+) = 11-dehydrocorticosterone + NADPH + H(+). It catalyses the reaction 17beta-estradiol + NADP(+) = estrone + NADPH + H(+). Functionally, has dehydrogenase activity against corticosterone (11 beta-hydroxysteroid) and estradiol (17 beta-hydroxysteroid), with similar activities to both sterols in the presence of NADP(+), but negligible activity to either sterol in the presence of NAD(+). May be involved in signal transduction regulated by various sterols. The chain is 11-beta-hydroxysteroid dehydrogenase B from Sesamum indicum (Oriental sesame).